We begin with the raw amino-acid sequence, 276 residues long: Formamidopyrimidine-DNA glycosylase (276 aa).

Catalysis depends on P2, which acts as the Schiff-base intermediate with DNA. Catalysis depends on E3, which acts as the Proton donor. K60 acts as the Proton donor; for beta-elimination activity in catalysis. DNA is bound by residues R113 and R152. The FPG-type zinc finger occupies 241–275 (NVFRKTGHPCPRCGHLIEKLIVAQRSTHICPICQK). R265 (proton donor; for delta-elimination activity) is an active-site residue.

The protein belongs to the FPG family. Monomer. Zn(2+) serves as cofactor.

It catalyses the reaction Hydrolysis of DNA containing ring-opened 7-methylguanine residues, releasing 2,6-diamino-4-hydroxy-5-(N-methyl)formamidopyrimidine.. It carries out the reaction 2'-deoxyribonucleotide-(2'-deoxyribose 5'-phosphate)-2'-deoxyribonucleotide-DNA = a 3'-end 2'-deoxyribonucleotide-(2,3-dehydro-2,3-deoxyribose 5'-phosphate)-DNA + a 5'-end 5'-phospho-2'-deoxyribonucleoside-DNA + H(+). In terms of biological role, involved in base excision repair of DNA damaged by oxidation or by mutagenic agents. Acts as a DNA glycosylase that recognizes and removes damaged bases. Has a preference for oxidized purines, such as 7,8-dihydro-8-oxoguanine (8-oxoG). Has AP (apurinic/apyrimidinic) lyase activity and introduces nicks in the DNA strand. Cleaves the DNA backbone by beta-delta elimination to generate a single-strand break at the site of the removed base with both 3'- and 5'-phosphates. In Protochlamydia amoebophila (strain UWE25), this protein is Formamidopyrimidine-DNA glycosylase.